We begin with the raw amino-acid sequence, 977 residues long: Ubiquitin-like modifier-activating enzyme 7 (977 aa).

The protein belongs to the ubiquitin-activating E1 family. Post-translationally, ubiquitinated by RNF170.

It is found in the cytoplasm. The protein localises to the nucleus. Its pathway is protein modification; protein ubiquitination. In terms of biological role, E1-activating enzyme that catalyzes the covalent conjugation of the ubiquitin-like protein product of ISG15 to additional interferons stimulated proteins (ISGs) as well as other cellular proteins such as P53 in a process termed protein ISGylation. Plays an essential role in antiviral immunity together with ISG15 by restricting the replication of many viruses including rabies virus, influenza virus, sindbis virus or rotavirus. The protein is Ubiquitin-like modifier-activating enzyme 7 of Mus musculus (Mouse).